The primary structure comprises 340 residues: Guanine nucleotide-binding protein G(I)/G(S)/G(T) subunit beta-3 (340 aa).

7 WD repeats span residues 53–83 (GHLAKIYAMHWATDSKLLVSASQDGKLIVWD), 95–125 (LRSSWVMTCAYAPSGNFVACGGLDNMCSIYS), 141–170 (AHTGYLSCCRFLDDNNIVTSSGDTTCALWD), 182–212 (GHTGDCMSLAVSPDYKLFISGACDASAKLWD), 224–254 (GHESDINAICFFPNGEAICTGSDDASCRLFD), 268–298 (SIICGITSVAFSLSGRLLFAGYDDFNCNVWD), and 310–340 (GHDNRVSCLGVTADGMAVATGSWDSFLKIWN).

This sequence belongs to the WD repeat G protein beta family. In terms of assembly, g proteins are composed of 3 units, alpha, beta and gamma. Interacts with RASD2. Expressed at a high level in the heart and at a much lower level in the brain.

In terms of biological role, guanine nucleotide-binding proteins (G proteins) are involved as a modulator or transducer in various transmembrane signaling systems. The beta and gamma chains are required for the GTPase activity, for replacement of GDP by GTP, and for G protein-effector interaction. This Rattus norvegicus (Rat) protein is Guanine nucleotide-binding protein G(I)/G(S)/G(T) subunit beta-3 (Gnb3).